Consider the following 514-residue polypeptide: Efflux pump aflT (514 aa).

The next 10 membrane-spanning stretches (helical) occupy residues 13 to 33 (ISGM…FCVA), 61 to 81 (SAYL…YALF), 85 to 105 (WVFL…GVAP), 116 to 136 (IAGV…AHIV), 146 to 166 (GLLG…GGAF), 174 to 194 (WCFY…LFLL), 218 to 238 (GTIV…WGGV), 247 to 267 (IIAL…IQVL), 289 to 309 (VFVF…PIWF), and 321 to 341 (GIDS…SGAV). Residue asparagine 343 is glycosylated (N-linked (GlcNAc...) asparagine). A run of 4 helical transmembrane segments spans residues 351-371 (WFIV…LFTV), 378-398 (WIGF…QGAV), 411-431 (IGTA…TSVA), and 485-505 (LDVF…AVGI).

This sequence belongs to the major facilitator superfamily. TCR/Tet family.

Its subcellular location is the cell membrane. Functionally, efflux pump; part of the gene cluster that mediates the biosynthesis of aflatoxins. The polypeptide is Efflux pump aflT (Aspergillus parasiticus (strain ATCC 56775 / NRRL 5862 / SRRC 143 / SU-1)).